A 552-amino-acid chain; its full sequence is Formate--tetrahydrofolate ligase (552 aa).

63–70 (TPFGEGKT) contacts ATP.

It belongs to the formate--tetrahydrofolate ligase family.

The enzyme catalyses (6S)-5,6,7,8-tetrahydrofolate + formate + ATP = (6R)-10-formyltetrahydrofolate + ADP + phosphate. It functions in the pathway one-carbon metabolism; tetrahydrofolate interconversion. This chain is Formate--tetrahydrofolate ligase, found in Caldicellulosiruptor bescii (strain ATCC BAA-1888 / DSM 6725 / KCTC 15123 / Z-1320) (Anaerocellum thermophilum).